We begin with the raw amino-acid sequence, 271 residues long: 2-dehydro-3-deoxyphosphooctonate aldolase (271 aa).

The protein belongs to the KdsA family.

The protein resides in the cytoplasm. It catalyses the reaction D-arabinose 5-phosphate + phosphoenolpyruvate + H2O = 3-deoxy-alpha-D-manno-2-octulosonate-8-phosphate + phosphate. Its pathway is carbohydrate biosynthesis; 3-deoxy-D-manno-octulosonate biosynthesis; 3-deoxy-D-manno-octulosonate from D-ribulose 5-phosphate: step 2/3. The protein operates within bacterial outer membrane biogenesis; lipopolysaccharide biosynthesis. The sequence is that of 2-dehydro-3-deoxyphosphooctonate aldolase from Campylobacter jejuni subsp. jejuni serotype O:2 (strain ATCC 700819 / NCTC 11168).